The sequence spans 337 residues: Holliday junction branch migration complex subunit RuvB (337 aa).

The large ATPase domain (RuvB-L) stretch occupies residues 4-184 (ADRLIQPQVL…FGIPLRLEFY (181 aa)). Residues Arg24, Gly65, Lys68, Thr69, Thr70, 131-133 (EDY), Arg174, Tyr184, and Arg221 each bind ATP. Thr69 contributes to the Mg(2+) binding site. The small ATPAse domain (RuvB-S) stretch occupies residues 185-255 (NVKDLCTIVT…VAQQALDMLD (71 aa)). Residues 258-337 (QEGFDYLDRK…FNIITPDVPK (80 aa)) form a head domain (RuvB-H) region. The DNA site is built by Arg294, Arg313, and Arg318.

It belongs to the RuvB family. Homohexamer. Forms an RuvA(8)-RuvB(12)-Holliday junction (HJ) complex. HJ DNA is sandwiched between 2 RuvA tetramers; dsDNA enters through RuvA and exits via RuvB. An RuvB hexamer assembles on each DNA strand where it exits the tetramer. Each RuvB hexamer is contacted by two RuvA subunits (via domain III) on 2 adjacent RuvB subunits; this complex drives branch migration. In the full resolvosome a probable DNA-RuvA(4)-RuvB(12)-RuvC(2) complex forms which resolves the HJ.

Its subcellular location is the cytoplasm. It carries out the reaction ATP + H2O = ADP + phosphate + H(+). Its function is as follows. The RuvA-RuvB-RuvC complex processes Holliday junction (HJ) DNA during genetic recombination and DNA repair, while the RuvA-RuvB complex plays an important role in the rescue of blocked DNA replication forks via replication fork reversal (RFR). RuvA specifically binds to HJ cruciform DNA, conferring on it an open structure. The RuvB hexamer acts as an ATP-dependent pump, pulling dsDNA into and through the RuvAB complex. RuvB forms 2 homohexamers on either side of HJ DNA bound by 1 or 2 RuvA tetramers; 4 subunits per hexamer contact DNA at a time. Coordinated motions by a converter formed by DNA-disengaged RuvB subunits stimulates ATP hydrolysis and nucleotide exchange. Immobilization of the converter enables RuvB to convert the ATP-contained energy into a lever motion, pulling 2 nucleotides of DNA out of the RuvA tetramer per ATP hydrolyzed, thus driving DNA branch migration. The RuvB motors rotate together with the DNA substrate, which together with the progressing nucleotide cycle form the mechanistic basis for DNA recombination by continuous HJ branch migration. Branch migration allows RuvC to scan DNA until it finds its consensus sequence, where it cleaves and resolves cruciform DNA. The protein is Holliday junction branch migration complex subunit RuvB of Shewanella denitrificans (strain OS217 / ATCC BAA-1090 / DSM 15013).